Consider the following 168-residue polypeptide: NADH-quinone oxidoreductase subunit B (168 aa).

[4Fe-4S] cluster is bound by residues Cys-49, Cys-50, Cys-114, and Cys-144.

Belongs to the complex I 20 kDa subunit family. NDH-1 is composed of 14 different subunits. Subunits NuoB, C, D, E, F, and G constitute the peripheral sector of the complex. Requires [4Fe-4S] cluster as cofactor.

It is found in the cell membrane. The enzyme catalyses a quinone + NADH + 5 H(+)(in) = a quinol + NAD(+) + 4 H(+)(out). In terms of biological role, NDH-1 shuttles electrons from NADH, via FMN and iron-sulfur (Fe-S) centers, to quinones in the respiratory chain. Couples the redox reaction to proton translocation (for every two electrons transferred, four hydrogen ions are translocated across the cytoplasmic membrane), and thus conserves the redox energy in a proton gradient. The chain is NADH-quinone oxidoreductase subunit B from Wolbachia sp. subsp. Brugia malayi (strain TRS).